A 194-amino-acid polypeptide reads, in one-letter code: Fibroblast growth factor 7 (194 aa).

The signal sequence occupies residues 1-31 (MRKWILTWILPTLLYRSCFHIICLVGTISLA). N-linked (GlcNAc...) asparagine glycosylation occurs at Asn45.

It belongs to the heparin-binding growth factors family. Interacts with FGFBP1. Interacts with FGFR2. Affinity between fibroblast growth factors (FGFs) and their receptors is increased by heparan sulfate glycosaminoglycans that function as coreceptors.

It is found in the secreted. Its function is as follows. Plays an important role in the regulation of embryonic development, cell proliferation and cell differentiation. Required for normal branching morphogenesis. Growth factor active on keratinocytes. Possible major paracrine effector of normal epithelial cell proliferation. This Canis lupus familiaris (Dog) protein is Fibroblast growth factor 7 (FGF7).